The following is a 127-amino-acid chain: Nuclear transport factor 2 (127 aa).

K4 carries the post-translational modification N6-acetyllysine. Residues 10 to 121 (IGSSFIQHYY…WVCTNDMFRL (112 aa)) form the NTF2 domain.

As to quaternary structure, homodimer. Interacts with RAN (GDP-bound form); the interaction is direct and regulates RAN nuclear import. Interacts with the nucleoporins NUP54, NUP58 and NUP62 (via FG repeats); recruits NUTF2 to the nuclear pore complex a step required for NUTF2-mediated GDP-bound RAN nuclear import. Interacts with CAPG; mediates its nuclear import.

It is found in the cytoplasm. It localises to the cytosol. The protein resides in the nucleus outer membrane. The protein localises to the nucleus. Its subcellular location is the nuclear pore complex. It is found in the nucleus inner membrane. It localises to the nucleoplasm. Mediates the import of GDP-bound RAN from the cytoplasm into the nucleus which is essential for the function of RAN in cargo receptor-mediated nucleocytoplasmic transport. Thereby, plays indirectly a more general role in cargo receptor-mediated nucleocytoplasmic transport. Interacts with GDP-bound RAN in the cytosol, recruits it to the nuclear pore complex via its interaction with nucleoporins and promotes its nuclear import. This is Nuclear transport factor 2 from Bos taurus (Bovine).